We begin with the raw amino-acid sequence, 88 residues long: Large ribosomal subunit protein bL31B (88 aa).

This sequence belongs to the bacterial ribosomal protein bL31 family. Type B subfamily. Part of the 50S ribosomal subunit.

The chain is Large ribosomal subunit protein bL31B from Herminiimonas arsenicoxydans.